A 517-amino-acid polypeptide reads, in one-letter code: Bifunctional purine biosynthesis protein PurH (517 aa).

The MGS-like domain maps to 1–146 (MAPIALLSVS…KNHAHVAVLT (146 aa)).

This sequence belongs to the PurH family.

The catalysed reaction is (6R)-10-formyltetrahydrofolate + 5-amino-1-(5-phospho-beta-D-ribosyl)imidazole-4-carboxamide = 5-formamido-1-(5-phospho-D-ribosyl)imidazole-4-carboxamide + (6S)-5,6,7,8-tetrahydrofolate. The enzyme catalyses IMP + H2O = 5-formamido-1-(5-phospho-D-ribosyl)imidazole-4-carboxamide. It functions in the pathway purine metabolism; IMP biosynthesis via de novo pathway; 5-formamido-1-(5-phospho-D-ribosyl)imidazole-4-carboxamide from 5-amino-1-(5-phospho-D-ribosyl)imidazole-4-carboxamide (10-formyl THF route): step 1/1. The protein operates within purine metabolism; IMP biosynthesis via de novo pathway; IMP from 5-formamido-1-(5-phospho-D-ribosyl)imidazole-4-carboxamide: step 1/1. The sequence is that of Bifunctional purine biosynthesis protein PurH from Prochlorococcus marinus (strain MIT 9303).